The following is a 222-amino-acid chain: Pyridoxine/pyridoxamine 5'-phosphate oxidase (222 aa).

Residues Arg14–Tyr17 and Lys71 each bind substrate. Residues Arg66–Lys71, Phe81–Thr82, Arg87, Lys88, and Gln110 contribute to the FMN site. 3 residues coordinate substrate: Tyr128, Arg132, and Ser136. Residues Gln145–Ser146 and Trp190 each bind FMN. Arg196–Asn198 serves as a coordination point for substrate. Arg200 contacts FMN.

This sequence belongs to the pyridoxamine 5'-phosphate oxidase family. As to quaternary structure, homodimer. It depends on FMN as a cofactor.

The enzyme catalyses pyridoxamine 5'-phosphate + O2 + H2O = pyridoxal 5'-phosphate + H2O2 + NH4(+). It carries out the reaction pyridoxine 5'-phosphate + O2 = pyridoxal 5'-phosphate + H2O2. The protein operates within cofactor metabolism; pyridoxal 5'-phosphate salvage; pyridoxal 5'-phosphate from pyridoxamine 5'-phosphate: step 1/1. Its pathway is cofactor metabolism; pyridoxal 5'-phosphate salvage; pyridoxal 5'-phosphate from pyridoxine 5'-phosphate: step 1/1. In terms of biological role, catalyzes the oxidation of either pyridoxine 5'-phosphate (PNP) or pyridoxamine 5'-phosphate (PMP) into pyridoxal 5'-phosphate (PLP). This is Pyridoxine/pyridoxamine 5'-phosphate oxidase from Prochlorococcus marinus (strain MIT 9303).